We begin with the raw amino-acid sequence, 310 residues long: Dopamine receptor-interacting protein 1 (310 aa).

As to quaternary structure, interacts with DRD1.

Could be a regulator of the dopamine receptor signaling pathway. This is Dopamine receptor-interacting protein 1 from Homo sapiens (Human).